The sequence spans 404 residues: BRCA1-A complex subunit Abraxas 1 (404 aa).

Residues 7–161 form the MPN domain; the sequence is YIRVSGFVLG…YAVYRSHGSQ (155 aa). A coiled-coil region spans residues 219–268; sequence MNNSLQGELKMACKKVEESERLVEKLLADVSDLRRMVNERKQELREISAD. A disordered region spans residues 339 to 404; it reads GRLGRGGGTS…NLDVSNSPVF (66 aa). Over residues 391–404 the composition is skewed to polar residues; the sequence is RNGNNLDVSNSPVF. Serine 401 carries the post-translational modification Phosphoserine. Positions 401–404 match the pSXXF motif motif; sequence SPVF.

This sequence belongs to the FAM175 family. Abraxas subfamily. As to quaternary structure, component of the BRCA1-A complex. Component of the BRISC complex. Homodimer. Interacts directly (when phosphorylated at Ser-401) with brca1. The phosphorylated homodimer can interact directly with two brca1 chains, giving rise to a heterotetramer. In terms of processing, phosphorylation of Ser-401 of the pSXXF motif by ATM or ATR constitutes a specific recognition motif for the BRCT domain of BRCA1.

The protein localises to the nucleus. Its function is as follows. Involved in DNA damage response and double-strand break (DSB) repair. Component of the BRCA1-A complex, acting as a central scaffold protein that assembles the various components of the complex and mediates the recruitment of brca1. The BRCA1-A complex specifically recognizes 'Lys-63'-linked ubiquitinated histones H2A and H2AX at DNA lesion sites, leading to target the brca1-bard1 heterodimer to sites of DNA damage at DSBs. This complex also possesses deubiquitinase activity that specifically removes 'Lys-63'-linked ubiquitin on histones H2A and H2AX. This chain is BRCA1-A complex subunit Abraxas 1, found in Salmo salar (Atlantic salmon).